Reading from the N-terminus, the 266-residue chain is 3-methyl-2-oxobutanoate hydroxymethyltransferase 2 (266 aa).

Positions 45 and 84 each coordinate Mg(2+). 3-methyl-2-oxobutanoate-binding positions include 45–46 (DS), aspartate 84, and lysine 112. Mg(2+) is bound at residue glutamate 114. Glutamate 181 acts as the Proton acceptor in catalysis.

It belongs to the PanB family. As to quaternary structure, homodecamer; pentamer of dimers. The cofactor is Mg(2+).

Its subcellular location is the cytoplasm. It carries out the reaction 3-methyl-2-oxobutanoate + (6R)-5,10-methylene-5,6,7,8-tetrahydrofolate + H2O = 2-dehydropantoate + (6S)-5,6,7,8-tetrahydrofolate. The protein operates within cofactor biosynthesis; (R)-pantothenate biosynthesis; (R)-pantoate from 3-methyl-2-oxobutanoate: step 1/2. Its function is as follows. Catalyzes the reversible reaction in which hydroxymethyl group from 5,10-methylenetetrahydrofolate is transferred onto alpha-ketoisovalerate to form ketopantoate. The chain is 3-methyl-2-oxobutanoate hydroxymethyltransferase 2 from Pseudomonas aeruginosa (strain ATCC 15692 / DSM 22644 / CIP 104116 / JCM 14847 / LMG 12228 / 1C / PRS 101 / PAO1).